The sequence spans 150 residues: Cytochrome c oxidase subunit 5A, mitochondrial (150 aa).

The N-terminal 41 residues, 1-41 (MLGAALRRCAVAATSRAGPRGLLHSAPNPGPAAAIQSVRCY), are a transit peptide targeting the mitochondrion. The SIFI-degron motif lies at 2–17 (LGAALRRCAVAATSRA). An N6-acetyllysine mark is found at K87 and K113. T141 carries the phosphothreonine modification.

Belongs to the cytochrome c oxidase subunit 5A family. Component of the cytochrome c oxidase (complex IV, CIV), a multisubunit enzyme composed of 14 subunits. The complex is composed of a catalytic core of 3 subunits MT-CO1, MT-CO2 and MT-CO3, encoded in the mitochondrial DNA, and 11 supernumerary subunits COX4I, COX5A, COX5B, COX6A, COX6B, COX6C, COX7A, COX7B, COX7C, COX8 and NDUFA4, which are encoded in the nuclear genome. The complex exists as a monomer or a dimer and forms supercomplexes (SCs) in the inner mitochondrial membrane with NADH-ubiquinone oxidoreductase (complex I, CI) and ubiquinol-cytochrome c oxidoreductase (cytochrome b-c1 complex, complex III, CIII), resulting in different assemblies (supercomplex SCI(1)III(2)IV(1) and megacomplex MCI(2)III(2)IV(2)). Interacts with AFG1L. Interacts with RAB5IF. In terms of processing, in response to mitochondrial stress, the precursor protein is ubiquitinated by the SIFI complex in the cytoplasm before mitochondrial import, leading to its degradation. Within the SIFI complex, UBR4 initiates ubiquitin chain that are further elongated or branched by KCMF1.

It is found in the mitochondrion inner membrane. The protein operates within energy metabolism; oxidative phosphorylation. Its function is as follows. Component of the cytochrome c oxidase, the last enzyme in the mitochondrial electron transport chain which drives oxidative phosphorylation. The respiratory chain contains 3 multisubunit complexes succinate dehydrogenase (complex II, CII), ubiquinol-cytochrome c oxidoreductase (cytochrome b-c1 complex, complex III, CIII) and cytochrome c oxidase (complex IV, CIV), that cooperate to transfer electrons derived from NADH and succinate to molecular oxygen, creating an electrochemical gradient over the inner membrane that drives transmembrane transport and the ATP synthase. Cytochrome c oxidase is the component of the respiratory chain that catalyzes the reduction of oxygen to water. Electrons originating from reduced cytochrome c in the intermembrane space (IMS) are transferred via the dinuclear copper A center (CU(A)) of subunit 2 and heme A of subunit 1 to the active site in subunit 1, a binuclear center (BNC) formed by heme A3 and copper B (CU(B)). The BNC reduces molecular oxygen to 2 water molecules using 4 electrons from cytochrome c in the IMS and 4 protons from the mitochondrial matrix. The polypeptide is Cytochrome c oxidase subunit 5A, mitochondrial (COX5A) (Saguinus labiatus (Red-chested mustached tamarin)).